Here is a 295-residue protein sequence, read N- to C-terminus: Acetyl-coenzyme A carboxylase carboxyl transferase subunit beta (295 aa).

The CoA carboxyltransferase N-terminal domain maps to 25–294; the sequence is VWTKCTSCEQ…PFNAEELSDT (270 aa). Zn(2+)-binding residues include cysteine 29, cysteine 32, cysteine 48, and cysteine 51. Residues 29 to 51 form a C4-type zinc finger; it reads CTSCEQVLYRDELKRHLEVCPKC.

It belongs to the AccD/PCCB family. Acetyl-CoA carboxylase is a heterohexamer composed of biotin carboxyl carrier protein (AccB), biotin carboxylase (AccC) and two subunits each of ACCase subunit alpha (AccA) and ACCase subunit beta (AccD). Zn(2+) serves as cofactor.

It is found in the cytoplasm. It catalyses the reaction N(6)-carboxybiotinyl-L-lysyl-[protein] + acetyl-CoA = N(6)-biotinyl-L-lysyl-[protein] + malonyl-CoA. It participates in lipid metabolism; malonyl-CoA biosynthesis; malonyl-CoA from acetyl-CoA: step 1/1. Functionally, component of the acetyl coenzyme A carboxylase (ACC) complex. Biotin carboxylase (BC) catalyzes the carboxylation of biotin on its carrier protein (BCCP) and then the CO(2) group is transferred by the transcarboxylase to acetyl-CoA to form malonyl-CoA. The sequence is that of Acetyl-coenzyme A carboxylase carboxyl transferase subunit beta from Mannheimia succiniciproducens (strain KCTC 0769BP / MBEL55E).